Consider the following 1224-residue polypeptide: DNA-directed RNA polymerase subunit beta (1224 aa).

Belongs to the RNA polymerase beta chain family. The RNAP catalytic core consists of 2 alpha, 1 beta, 1 beta' and 1 omega subunit. When a sigma factor is associated with the core the holoenzyme is formed, which can initiate transcription.

It carries out the reaction RNA(n) + a ribonucleoside 5'-triphosphate = RNA(n+1) + diphosphate. Functionally, DNA-dependent RNA polymerase catalyzes the transcription of DNA into RNA using the four ribonucleoside triphosphates as substrates. The polypeptide is DNA-directed RNA polymerase subunit beta (Pelotomaculum thermopropionicum (strain DSM 13744 / JCM 10971 / SI)).